We begin with the raw amino-acid sequence, 581 residues long: Proline--tRNA ligase (581 aa).

It belongs to the class-II aminoacyl-tRNA synthetase family. ProS type 1 subfamily. As to quaternary structure, homodimer.

It is found in the cytoplasm. It catalyses the reaction tRNA(Pro) + L-proline + ATP = L-prolyl-tRNA(Pro) + AMP + diphosphate. In terms of biological role, catalyzes the attachment of proline to tRNA(Pro) in a two-step reaction: proline is first activated by ATP to form Pro-AMP and then transferred to the acceptor end of tRNA(Pro). As ProRS can inadvertently accommodate and process non-cognate amino acids such as alanine and cysteine, to avoid such errors it has two additional distinct editing activities against alanine. One activity is designated as 'pretransfer' editing and involves the tRNA(Pro)-independent hydrolysis of activated Ala-AMP. The other activity is designated 'posttransfer' editing and involves deacylation of mischarged Ala-tRNA(Pro). The misacylated Cys-tRNA(Pro) is not edited by ProRS. This is Proline--tRNA ligase from Rhodococcus erythropolis (strain PR4 / NBRC 100887).